The primary structure comprises 218 residues: Small ribosomal subunit protein uS3c (218 aa).

The KH type-2 domain occupies 43–118 (IKNYVQKNMK…KLNISITRIE (76 aa)).

The protein belongs to the universal ribosomal protein uS3 family. In terms of assembly, part of the 30S ribosomal subunit.

The protein localises to the plastid. The protein resides in the chloroplast. This chain is Small ribosomal subunit protein uS3c (rps3), found in Populus trichocarpa (Western balsam poplar).